The chain runs to 427 residues: Glutamate-1-semialdehyde 2,1-aminomutase (427 aa).

Lys-265 carries the post-translational modification N6-(pyridoxal phosphate)lysine.

It belongs to the class-III pyridoxal-phosphate-dependent aminotransferase family. HemL subfamily. Homodimer. The cofactor is pyridoxal 5'-phosphate.

It localises to the cytoplasm. The catalysed reaction is (S)-4-amino-5-oxopentanoate = 5-aminolevulinate. It participates in porphyrin-containing compound metabolism; protoporphyrin-IX biosynthesis; 5-aminolevulinate from L-glutamyl-tRNA(Glu): step 2/2. This is Glutamate-1-semialdehyde 2,1-aminomutase from Pseudomonas syringae pv. tomato (strain ATCC BAA-871 / DC3000).